The following is an 867-amino-acid chain: Coiled-coil domain-containing protein 178 (867 aa).

Coiled coils occupy residues 153-204 (DEKC…KIDS), 233-414 (WHLE…ENQY), 445-470 (ACTKLTEDNKKLEIDINKITVKTNES), and 662-696 (MIFYAKINELNEELKAKEEEKKSFDQTLEILKNKF).

The sequence is that of Coiled-coil domain-containing protein 178 (CCDC178) from Homo sapiens (Human).